The sequence spans 258 residues: Triosephosphate isomerase (258 aa).

11–13 lines the substrate pocket; that stretch reads NWK. Residue His101 is the Electrophile of the active site. Glu173 functions as the Proton acceptor in the catalytic mechanism. Residues Gly179, Ser219, and 240-241 contribute to the substrate site; that span reads GG.

This sequence belongs to the triosephosphate isomerase family. Homodimer.

It is found in the cytoplasm. It carries out the reaction D-glyceraldehyde 3-phosphate = dihydroxyacetone phosphate. It participates in carbohydrate biosynthesis; gluconeogenesis. Its pathway is carbohydrate degradation; glycolysis; D-glyceraldehyde 3-phosphate from glycerone phosphate: step 1/1. Its function is as follows. Involved in the gluconeogenesis. Catalyzes stereospecifically the conversion of dihydroxyacetone phosphate (DHAP) to D-glyceraldehyde-3-phosphate (G3P). This is Triosephosphate isomerase from Streptomyces avermitilis (strain ATCC 31267 / DSM 46492 / JCM 5070 / NBRC 14893 / NCIMB 12804 / NRRL 8165 / MA-4680).